The primary structure comprises 207 residues: ATP synthase subunit b 2 (207 aa).

Residues 53-72 form a helical membrane-spanning segment; the sequence is TYASQLLWLVITFSVFYLLM.

This sequence belongs to the ATPase B chain family. F-type ATPases have 2 components, F(1) - the catalytic core - and F(0) - the membrane proton channel. F(1) has five subunits: alpha(3), beta(3), gamma(1), delta(1), epsilon(1). F(0) has three main subunits: a(1), b(2) and c(10-14). The alpha and beta chains form an alternating ring which encloses part of the gamma chain. F(1) is attached to F(0) by a central stalk formed by the gamma and epsilon chains, while a peripheral stalk is formed by the delta and b chains.

It is found in the cell inner membrane. Its function is as follows. F(1)F(0) ATP synthase produces ATP from ADP in the presence of a proton or sodium gradient. F-type ATPases consist of two structural domains, F(1) containing the extramembraneous catalytic core and F(0) containing the membrane proton channel, linked together by a central stalk and a peripheral stalk. During catalysis, ATP synthesis in the catalytic domain of F(1) is coupled via a rotary mechanism of the central stalk subunits to proton translocation. Functionally, component of the F(0) channel, it forms part of the peripheral stalk, linking F(1) to F(0). The b'-subunit is a diverged and duplicated form of b found in plants and photosynthetic bacteria. This chain is ATP synthase subunit b 2 (atpF2), found in Rhizobium etli (strain CIAT 652).